Consider the following 251-residue polypeptide: MICYELPLNERIRMLLRLEDLFDKIDFFSARDTSFEHHAALVALFEILDVTSRSDLKSDLLQELDKQRTMLEGLQDNPGVSEKALIHILQDIRAAFRGLLDIPGRIGGHLRDDEWLMSVKQRMSIPGGACEFDLPAYHYWLNMAPDARRADLQNWITPLTSIRSGINIILNILRNSGTKFCYIAAKGVFQQAGSEHQAHLLCLHISDEISCIPEISANKYALNIRFIPWRSDHKTEVCEEDVPFELTFCSL.

The protein belongs to the ZapD family. In terms of assembly, interacts with FtsZ.

It localises to the cytoplasm. Its function is as follows. Cell division factor that enhances FtsZ-ring assembly. Directly interacts with FtsZ and promotes bundling of FtsZ protofilaments, with a reduction in FtsZ GTPase activity. The sequence is that of Cell division protein ZapD from Nitrosomonas eutropha (strain DSM 101675 / C91 / Nm57).